We begin with the raw amino-acid sequence, 209 residues long: Peptide methionine sulfoxide reductase MsrA (209 aa).

Residue C14 is part of the active site. The tract at residues 183–209 (FSALTTGGNQPGARGGLTNNTCQHPRH) is disordered. Residues 199-209 (LTNNTCQHPRH) show a composition bias toward polar residues.

This sequence belongs to the MsrA Met sulfoxide reductase family.

It catalyses the reaction L-methionyl-[protein] + [thioredoxin]-disulfide + H2O = L-methionyl-(S)-S-oxide-[protein] + [thioredoxin]-dithiol. The catalysed reaction is [thioredoxin]-disulfide + L-methionine + H2O = L-methionine (S)-S-oxide + [thioredoxin]-dithiol. Has an important function as a repair enzyme for proteins that have been inactivated by oxidation. Catalyzes the reversible oxidation-reduction of methionine sulfoxide in proteins to methionine. The chain is Peptide methionine sulfoxide reductase MsrA from Pseudomonas fluorescens.